The primary structure comprises 456 residues: Phosphomethylpyrimidine synthase (456 aa).

Substrate-binding positions include asparagine 80, methionine 109, tyrosine 139, histidine 175, 195-197 (SRG), 236-239 (DSLR), and glutamate 275. Position 279 (histidine 279) interacts with Zn(2+). Tyrosine 302 is a substrate binding site. Histidine 343 serves as a coordination point for Zn(2+). Positions 423, 426, and 431 each coordinate [4Fe-4S] cluster.

The protein belongs to the ThiC family. [4Fe-4S] cluster is required as a cofactor.

It carries out the reaction 5-amino-1-(5-phospho-beta-D-ribosyl)imidazole + S-adenosyl-L-methionine = 4-amino-2-methyl-5-(phosphooxymethyl)pyrimidine + CO + 5'-deoxyadenosine + formate + L-methionine + 3 H(+). It functions in the pathway cofactor biosynthesis; thiamine diphosphate biosynthesis. Its function is as follows. Catalyzes the synthesis of the hydroxymethylpyrimidine phosphate (HMP-P) moiety of thiamine from aminoimidazole ribotide (AIR) in a radical S-adenosyl-L-methionine (SAM)-dependent reaction. The protein is Phosphomethylpyrimidine synthase of Synechococcus sp. (strain ATCC 27144 / PCC 6301 / SAUG 1402/1) (Anacystis nidulans).